Consider the following 522-residue polypeptide: Probable protein kinase UbiB (522 aa).

Residues 119–496 enclose the Protein kinase domain; it reads SFDADPVASA…QRRTNRLLLT (378 aa). Residues 125 to 133 and Lys-147 contribute to the ATP site; that span reads VASASIAQV. The active-site Proton acceptor is the Asp-282. The helical transmembrane segment at 494-514 threads the bilayer; that stretch reads LLTVFYLIGGFVAGGLFAHWI.

Belongs to the ABC1 family. UbiB subfamily.

The protein localises to the cell inner membrane. The protein operates within cofactor biosynthesis; ubiquinone biosynthesis [regulation]. In terms of biological role, is probably a protein kinase regulator of UbiI activity which is involved in aerobic coenzyme Q (ubiquinone) biosynthesis. This chain is Probable protein kinase UbiB, found in Leptothrix cholodnii (strain ATCC 51168 / LMG 8142 / SP-6) (Leptothrix discophora (strain SP-6)).